The following is a 616-amino-acid chain: Chaperone protein DnaK (616 aa).

Phosphothreonine; by autocatalysis is present on T175. The disordered stretch occupies residues G579–V605.

Belongs to the heat shock protein 70 family.

Functionally, acts as a chaperone. This Clostridium botulinum (strain Alaska E43 / Type E3) protein is Chaperone protein DnaK.